Consider the following 1055-residue polypeptide: Ephrin type-B receptor 2 (1055 aa).

Residues 1–18 form the signal peptide; sequence MALRRLGAALLLLPLLAA. At 19 to 543 the chain is on the extracellular side; sequence VEETLMDSTT…QTSIQEKLPL (525 aa). Residues 20-202 enclose the Eph LBD domain; the sequence is EETLMDSTTA…FYRKCPRIIQ (183 aa). 2 cysteine pairs are disulfide-bonded: C62–C184 and C97–C107. N-linked (GlcNAc...) asparagine glycans are attached at residues N265, N336, N428, and N482. Fibronectin type-III domains follow at residues 324-434 and 435-530; these read IPSA…TNQA and APSA…TMTE. Residues 544–564 form a helical membrane-spanning segment; the sequence is IIGSSAAGLVFLIAVVVIAIV. Topologically, residues 565-1055 are cytoplasmic; that stretch reads CNRRGFERAD…KESNDCSCGG (491 aa). Residues 621–884 form the Protein kinase domain; the sequence is VKIEQVIGAG…QIVNTLDKMI (264 aa). Residues 627–635 and K653 each bind ATP; that span reads IGAGEFGEV. D746 functions as the Proton acceptor in the catalytic mechanism. K891 participates in a covalent cross-link: Glycyl lysine isopeptide (Lys-Gly) (interchain with G-Cter in ubiquitin). An SAM domain is found at 913-977; sequence TSFNTVDEWL…LNSIQVMRAQ (65 aa). Phosphoserine is present on residues S983 and V984. Residues 984–986 carry the PDZ-binding (in isoform 2) motif; sequence VEG. Residues 990 to 1055 are disordered; the sequence is ARRPRATGRT…KESNDCSCGG (66 aa). Basic residues predominate over residues 991-1002; the sequence is RRPRATGRTKRC. Basic and acidic residues predominate over residues 1025 to 1049; that stretch reads KKTDPGRGREIQGIFFKEDSHKESN.

It belongs to the protein kinase superfamily. Tyr protein kinase family. Ephrin receptor subfamily. Heterotetramer upon binding of the ligand. The heterotetramer is composed of an ephrin dimer and a receptor dimer. Interacts (via PDZ-binding motif) with GRIP1 and PICK1 (via PDZ domain). Interacts with ARHGEF15; mediates ARHGEF15 phosphorylation, ubiquitination and degradation by the proteasome. Interacts with AQP1; involved in endolymph production in the inner ear. Interacts with SPSB1 and SPSB4. The phosphorylated form interacts with RASA1 (via SH2 domain 1). Interacts with EFNA5. Interacts with SH2D3C. In terms of processing, autophosphorylated; ligand binding stimulates autophosphorylation on tyrosine residues. Polyubiquitinated; ligand binding stimulates ubiquitination. Ubiquitinated by RNF186 at Lys-891, mainly through 'Lys-27'-linked polyubiquitin chains. Ubiquitinated by CRL2(KLHDC2) E3 ligase complex. Post-translationally, ligand binding induces cleavage by matrix metalloproteinases (MMPs) such as MMP7/MMP9, producing an EphB2/N-terminal fragment (NTF) and a C-terminal long fragment (EphB2-LF). EphB2-LF is further cleaved by MMPs, producing EphB2/CTF1 which is further cleaved by the PS1/gamma-secretase producing EphB2/CTF2. Brain, heart, lung, kidney, placenta, pancreas, liver and skeletal muscle. Preferentially expressed in fetal brain.

The protein localises to the cell membrane. The protein resides in the cell projection. It is found in the axon. Its subcellular location is the dendrite. The enzyme catalyses L-tyrosyl-[protein] + ATP = O-phospho-L-tyrosyl-[protein] + ADP + H(+). Its function is as follows. Receptor tyrosine kinase which binds promiscuously transmembrane ephrin-B family ligands residing on adjacent cells, leading to contact-dependent bidirectional signaling into neighboring cells. The signaling pathway downstream of the receptor is referred to as forward signaling while the signaling pathway downstream of the ephrin ligand is referred to as reverse signaling. Functions in axon guidance during development. Involved in the guidance of commissural axons, that form a major interhemispheric connection between the 2 temporal lobes of the cerebral cortex. Also involved in guidance of contralateral inner ear efferent growth cones at the midline and of retinal ganglion cell axons to the optic disk. In addition to axon guidance, also regulates dendritic spines development and maturation and stimulates the formation of excitatory synapses. Upon activation by EFNB1, abolishes the ARHGEF15-mediated negative regulation on excitatory synapse formation. Controls other aspects of development including angiogenesis, palate development and in inner ear development through regulation of endolymph production. Forward and reverse signaling through the EFNB2/EPHB2 complex regulate movement and adhesion of cells that tubularize the urethra and septate the cloaca. May function as a tumor suppressor. May be involved in the regulation of platelet activation and blood coagulation. This Homo sapiens (Human) protein is Ephrin type-B receptor 2 (EPHB2).